A 540-amino-acid polypeptide reads, in one-letter code: Phosphoenolpyruvate carboxykinase (ATP) (540 aa).

Arg-65 is a substrate binding site. Lys-87 carries the N6-acetyllysine modification. Substrate is bound by residues Tyr-207 and Lys-213. Residues Lys-213, His-232, and 248 to 256 (GLSGTGKTT) each bind ATP. Mn(2+) is bound by residues Lys-213 and His-232. Mn(2+) is bound at residue Asp-269. Residues Glu-297, Arg-333, 449–450 (RI), and Thr-455 each bind ATP. Arg-333 contacts substrate. Lys-523 bears the N6-acetyllysine mark.

It belongs to the phosphoenolpyruvate carboxykinase (ATP) family. In terms of assembly, monomer. Mn(2+) is required as a cofactor.

It is found in the cytoplasm. The enzyme catalyses oxaloacetate + ATP = phosphoenolpyruvate + ADP + CO2. Its pathway is carbohydrate biosynthesis; gluconeogenesis. Its function is as follows. Involved in the gluconeogenesis. Catalyzes the conversion of oxaloacetate (OAA) to phosphoenolpyruvate (PEP) through direct phosphoryl transfer between the nucleoside triphosphate and OAA. This is Phosphoenolpyruvate carboxykinase (ATP) from Shigella flexneri serotype 5b (strain 8401).